Here is a 4008-residue protein sequence, read N- to C-terminus: Extracellular matrix organizing protein FRAS1 (4008 aa).

Positions M1–G26 are cleaved as a signal peptide. VWFC domains follow at residues A27–V88, G93–V153, K157–S217, R219–V279, and G283–I343. Over A27 to S3901 the chain is Extracellular. The residue at position 344 (S344) is a Phosphoserine. The 71-residue stretch at G347–T417 folds into the VWFC 6 domain. N-linked (GlcNAc...) asparagine glycosylation occurs at N361. 14 FU repeats span residues K409–Q460, G462–Q505, R507–N553, Q555–A599, T602–S647, H649–L705, T708–H753, E755–L800, V803–A852, R854–L900, N903–L948, T952–Q997, S999–A1042, and K1046–V1089. A glycan (N-linked (GlcNAc...) asparagine) is linked at N728. N1093 and N1108 each carry an N-linked (GlcNAc...) asparagine glycan. 7 CSPG repeats span residues T1102 to S1197, A1217 to N1308, G1329 to S1438, A1463 to A1559, P1595 to T1689, G1710 to S1810, and P1833 to S1936. N1504 carries N-linked (GlcNAc...) asparagine glycosylation. N-linked (GlcNAc...) asparagine glycosylation occurs at N1777. 2 N-linked (GlcNAc...) asparagine glycosylation sites follow: N1948 and N1978. 5 CSPG repeats span residues E1957–T2057, T2078–V2177, P2199–S2291, S2311–S2404, and T2439–K2536. 5 consecutive Calx-beta domains span residues V2543–S2646, A2659–A2770, A2784–S2890, I2905–G3007, and A3025–G3129. N2563, N2664, and N2682 each carry an N-linked (GlcNAc...) asparagine glycan. N2908, N2985, N3070, N3218, N3676, and N3875 each carry an N-linked (GlcNAc...) asparagine glycan. A helical membrane pass occupies residues I3902–I3922. The Cytoplasmic segment spans residues N3923 to V4008.

It belongs to the FRAS1 family. In terms of tissue distribution, expressed in many adult tissues, with highest levels in kidney, pancreas and thalamus. Relatively high expression was also detected in fetal kidney and heart.

Its subcellular location is the cell membrane. In terms of biological role, involved in extracellular matrix organization. Required for the regulation of epidermal-basement membrane adhesion responsible for proper organogenesis during embryonic development. Involved in brain organization and function. The protein is Extracellular matrix organizing protein FRAS1 of Homo sapiens (Human).